Reading from the N-terminus, the 337-residue chain is Cathepsin L-like (337 aa).

The first 18 residues, 1–18 (MNRFILLALVAAVVAVNS), serve as a signal peptide directing secretion. Positions 19-119 (AKLSRQIESA…SSFLAPFNVQ (101 aa)) are cleaved as a propeptide — activation peptide. The N-linked (GlcNAc...) asparagine glycan is linked to Asn108. Cystine bridges form between Cys141–Cys184, Cys175–Cys217, and Cys276–Cys326. Cys144 is a catalytic residue. Active-site residues include His283 and Asn304.

Belongs to the peptidase C1 family. As to expression, expressed in intestine, pharynx posterior bulb, hypodermis and cuticle (at protein level). Expressed in germ cells, developing oocytes, sheath cells surrounding germ cells and oocytes, and in the eggshell (at protein level).

Its subcellular location is the secreted. It is found in the cytoplasmic granule. The protein resides in the lysosome. It localises to the endosome. The protein localises to the cytoplasmic vesicle. Its subcellular location is the phagosome. The enzyme catalyses Specificity close to that of papain. As compared to cathepsin B, cathepsin L exhibits higher activity toward protein substrates, but has little activity on Z-Arg-Arg-NHMec, and no peptidyl-dipeptidase activity.. Cysteine protease which plays an essential role in the degradation of proteins in lysosomes. During early embryogenesis, maternally required for the proteolytic processing of yolk proteins in platelets, a lysosome-like structure where a slow and controlled degradation of yolk proteins occurs. In the gonad, required for the clearance of apoptotic germ cells in the engulfing cell phagolysosomes. In embryos, required for the degradation of endocytic and autophagic cargos. In embryos, may play a role in the degradation of lipid-containing droplets. Required for larval development. The chain is Cathepsin L-like from Caenorhabditis elegans.